The chain runs to 364 residues: Aminomethyltransferase (364 aa).

This sequence belongs to the GcvT family. As to quaternary structure, the glycine cleavage system is composed of four proteins: P, T, L and H.

The enzyme catalyses N(6)-[(R)-S(8)-aminomethyldihydrolipoyl]-L-lysyl-[protein] + (6S)-5,6,7,8-tetrahydrofolate = N(6)-[(R)-dihydrolipoyl]-L-lysyl-[protein] + (6R)-5,10-methylene-5,6,7,8-tetrahydrofolate + NH4(+). In terms of biological role, the glycine cleavage system catalyzes the degradation of glycine. The sequence is that of Aminomethyltransferase from Geobacillus sp. (strain WCH70).